Reading from the N-terminus, the 356-residue chain is Tyrosine recombinase XerS (356 aa).

The 106-residue stretch at 16 to 121 (LMPWYVLEYY…ALSSLYKYLT (106 aa)) folds into the Core-binding (CB) domain. The Tyr recombinase domain maps to 169 to 354 (GFLTYIDQEH…VNDEQKNALD (186 aa)). Catalysis depends on residues Arg-210, Lys-234, His-306, Arg-309, and His-332. The active-site O-(3'-phospho-DNA)-tyrosine intermediate is the Tyr-341.

The protein belongs to the 'phage' integrase family. XerS subfamily.

It localises to the cytoplasm. With respect to regulation, ftsK is required for recombination. Its function is as follows. Site-specific tyrosine recombinase, which acts by catalyzing the cutting and rejoining of the recombining DNA molecules. Essential to convert dimers of the bacterial chromosome into monomers to permit their segregation at cell division. The polypeptide is Tyrosine recombinase XerS (Streptococcus pneumoniae (strain P1031)).